A 70-amino-acid polypeptide reads, in one-letter code: Beta-insect excitatory toxin LqqIT1 (70 aa).

Residues 2–65 (KNGYAVDSSG…ISDARKKYCD (64 aa)) form the LCN-type CS-alpha/beta domain. Intrachain disulfides connect Cys16–Cys37, Cys22–Cys42, Cys26–Cys44, and Cys38–Cys64.

It belongs to the long (4 C-C) scorpion toxin superfamily. Sodium channel inhibitor family. Beta subfamily. In terms of tissue distribution, expressed by the venom gland.

The protein localises to the secreted. Its function is as follows. Excitatory insect beta-toxins induce a spastic paralysis. They bind voltage-independently at site-4 of sodium channels (Nav) and shift the voltage of activation toward more negative potentials thereby affecting sodium channel activation and promoting spontaneous and repetitive firing. In vivo, this toxin induces a fast excitatory contraction paralysis on fly larvae. It is active only on insects. The chain is Beta-insect excitatory toxin LqqIT1 from Leiurus quinquestriatus quinquestriatus (Egyptian scorpion).